We begin with the raw amino-acid sequence, 92 residues long: Small ribosomal subunit protein uS19 (92 aa).

It belongs to the universal ribosomal protein uS19 family.

Functionally, protein S19 forms a complex with S13 that binds strongly to the 16S ribosomal RNA. The polypeptide is Small ribosomal subunit protein uS19 (Vibrio atlanticus (strain LGP32) (Vibrio splendidus (strain Mel32))).